We begin with the raw amino-acid sequence, 99 residues long: uncharacterized protein (99 aa).

Positions 1-19 (MLGMIRWVVEGTLVAMLLS) are cleaved as a signal peptide. Positions 71–99 (DGFGRINDSGPKRRGRDQSQYSSRFVELD) are disordered.

Its subcellular location is the cytoplasm. This is an uncharacterized protein from Saccharomyces cerevisiae (strain ATCC 204508 / S288c) (Baker's yeast).